The chain runs to 60 residues: Mastoparan-VT4 (60 aa).

A signal peptide spans 1–27 (MKNPILILFTAFIALLGFFGMSAEALA). 4 AXPX repeats span residues 27-30 (ADPK), 31-34 (ADPL), 35-38 (AGPN), and 41-44 (ADPE). The propeptide occupies 28–45 (DPKADPLAGPNPDADPEA). Leucine amide is present on L59.

This sequence belongs to the MCD family. Mastoparan subfamily. Expressed by the venom gland.

The protein localises to the secreted. The synthetic peptide shows antimicrobial activities against Gram-negative bacteria (but not against all strains tested), Gram-positive bacteria (not all strains tested) and the fungi C.albicans and C.parapsilosis. Exhibits little hemolytic activity against washed human erythrocytes. The chain is Mastoparan-VT4 from Vespa tropica (Greater banded hornet).